The sequence spans 536 residues: Inactive phospholipase D5 (536 aa).

Residues 1 to 68 (MEIRQHEWLS…DKLEHSQQKC (68 aa)) are Cytoplasmic-facing. A helical transmembrane segment spans residues 69–89 (IVIFALVCCFAVLVALIFSAV). Residues 90–536 (DIMGEDEDGL…NATGREPLSV (447 aa)) are Extracellular-facing. A glycan (N-linked (GlcNAc...) asparagine) is linked at N121. In terms of domain architecture, PLD phosphodiesterase 1 spans 215-242 (NKGRLQSSFWIVDKQHVYIGSAGLDWRS). N-linked (GlcNAc...) asparagine glycosylation is present at N302. Residues 434–460 (FPKLNRNKYMVTDGAAYIGNFDWVGND) form the PLD phosphodiesterase 2 domain. The interval 503 to 536 (QPTKQPNCSSLSKLKSPSKQPAMANATGREPLSV) is disordered. Residues 511-521 (SSLSKLKSPSK) show a composition bias toward low complexity.

This sequence belongs to the phospholipase D family.

Its subcellular location is the membrane. This chain is Inactive phospholipase D5 (Pld5), found in Mus musculus (Mouse).